The following is a 254-amino-acid chain: Protein N-terminal and lysine N-methyltransferase EFM7 (254 aa).

Residues Trp57, Gly84–Ala86, Asp106, Trp138, and Ser165 each bind S-adenosyl-L-methionine.

The protein belongs to the class I-like SAM-binding methyltransferase superfamily. EFM7 family.

Its subcellular location is the cytoplasm. Its function is as follows. S-adenosyl-L-methionine-dependent protein methyltransferase that trimethylates the N-terminal glycine 'Gly-2' of elongation factor 1-alpha, before also catalyzing the mono- and dimethylation of 'Lys-3'. The chain is Protein N-terminal and lysine N-methyltransferase EFM7 from Debaryomyces hansenii (strain ATCC 36239 / CBS 767 / BCRC 21394 / JCM 1990 / NBRC 0083 / IGC 2968) (Yeast).